A 207-amino-acid chain; its full sequence is Small ribosomal subunit protein uS10m (207 aa).

The N-terminal 14 residues, 1–14, are a transit peptide targeting the mitochondrion; the sequence is MNMFRQAVRSFVRY.

This sequence belongs to the universal ribosomal protein uS10 family. As to quaternary structure, part of the mitochondrial small ribosomal subunit.

It is found in the mitochondrion. Involved in mitochondrial genome encoded proteins translation. Involved in the binding of tRNA to the ribosomes. The chain is Small ribosomal subunit protein uS10m (RSM10) from Kluyveromyces lactis (strain ATCC 8585 / CBS 2359 / DSM 70799 / NBRC 1267 / NRRL Y-1140 / WM37) (Yeast).